A 511-amino-acid chain; its full sequence is ATP synthase subunit alpha (511 aa).

Gly169–Thr176 is an ATP binding site.

This sequence belongs to the ATPase alpha/beta chains family. In terms of assembly, F-type ATPases have 2 components, CF(1) - the catalytic core - and CF(0) - the membrane proton channel. CF(1) has five subunits: alpha(3), beta(3), gamma(1), delta(1), epsilon(1). CF(0) has three main subunits: a(1), b(2) and c(9-12). The alpha and beta chains form an alternating ring which encloses part of the gamma chain. CF(1) is attached to CF(0) by a central stalk formed by the gamma and epsilon chains, while a peripheral stalk is formed by the delta and b chains.

It is found in the cell inner membrane. The enzyme catalyses ATP + H2O + 4 H(+)(in) = ADP + phosphate + 5 H(+)(out). Produces ATP from ADP in the presence of a proton gradient across the membrane. The alpha chain is a regulatory subunit. The sequence is that of ATP synthase subunit alpha from Janthinobacterium sp. (strain Marseille) (Minibacterium massiliensis).